The chain runs to 165 residues: Pyruvoyl-dependent arginine decarboxylase (165 aa).

The residue at position 53 (Ser-53) is a Pyruvic acid (Ser).

The protein belongs to the PdaD family. Pyruvate is required as a cofactor.

It catalyses the reaction L-arginine + H(+) = agmatine + CO2. This is Pyruvoyl-dependent arginine decarboxylase from Methanococcus aeolicus (strain ATCC BAA-1280 / DSM 17508 / OCM 812 / Nankai-3).